We begin with the raw amino-acid sequence, 159 residues long: Ecotin (159 aa).

Positions 1-22 (MRPTPMTAILALSLAAAAPAMA) are cleaved as a signal peptide. Cys-68 and Cys-105 are joined by a disulfide.

The protein belongs to the protease inhibitor I11 (ecotin) family. As to quaternary structure, homodimer.

The protein localises to the periplasm. Its function is as follows. General inhibitor of family S1 serine proteases. The protein is Ecotin of Pseudomonas putida (strain ATCC 700007 / DSM 6899 / JCM 31910 / BCRC 17059 / LMG 24140 / F1).